The chain runs to 310 residues: MNVQVDMGRALAARDWRAVAALAVAMPAHAGAGTITDDDLRAAGVDRRVPEQKLGATIDEFASVRLPEQIDGEFVEGRRANLAVFDDARVAVRSHALAQRNLLERWETEHLGGTLDAAGSGGGIQPDPILQQLVDVIAQGKSDVDAYATIVEGLTKYFQSVADVMSKLQDYISAKDDKNMKIDGGKIKALIQQVIDNLPKMQLPKGADIARWRKELGDAVSISDSGVVTINPDKLIKMRDSLPPDGTVWDTARYQAWNTAFSGQKDNIQNDVQTLVEKYSHQNSNFDNLVKVLSGAISTLTDTAKSYLQI.

2 coiled-coil regions span residues 127 to 171 and 250 to 299; these read DPIL…LQDY and DTAR…AIST.

It belongs to the invasin protein D family.

It localises to the secreted. Required for invasion of epithelial cells, as well as for survival within host cells, escape from endocytic vesicles and subsequent actin-tail formation. Probably regulates the secretion of effectors BipB and BipC and their final integration into the target cell membrane. The chain is Translocator protein BipD (bipD) from Burkholderia thailandensis (strain ATCC 700388 / DSM 13276 / CCUG 48851 / CIP 106301 / E264).